The chain runs to 337 residues: Transcription initiation factor IIB (337 aa).

A TFIIB-type zinc finger spans residues 37-68 (YTVECPECGSRALVRDYERAELVCSECGLVID). Positions 41, 44, 60, and 63 each coordinate Zn(2+). 2 tandem repeats follow at residues 154-237 (SELD…SREL) and 248-329 (DYIP…ELAE).

It belongs to the TFIIB family.

Its function is as follows. Stabilizes TBP binding to an archaeal box-A promoter. Also responsible for recruiting RNA polymerase II to the pre-initiation complex (DNA-TBP-TFIIB). This chain is Transcription initiation factor IIB, found in Methanothrix thermoacetophila (strain DSM 6194 / JCM 14653 / NBRC 101360 / PT) (Methanosaeta thermophila).